A 653-amino-acid polypeptide reads, in one-letter code: Chromosomal replication initiator protein DnaA (653 aa).

The domain I, interacts with DnaA modulators stretch occupies residues 1–100 (MADVPADLAA…SAGEPPASAS (100 aa)). A disordered region spans residues 86-310 (ITVDDSAGEP…PAPATGPGEP (225 aa)). The interval 101–312 (PAPPRYEEPE…PATGPGEPTA (212 aa)) is domain II. Composition is skewed to basic and acidic residues over residues 120 to 150 (DPYE…DRHQ) and 221 to 267 (PSYD…RRNI). Over residues 284–310 (GSALPASSGAPGPLAAQPAPATGPGEP) the composition is skewed to low complexity. Residues 313-529 (RLNPKYLFDT…GALIRVTAFA (217 aa)) form a domain III, AAA+ region region. Positions 357, 359, 360, and 361 each coordinate ATP. The tract at residues 530–653 (SLNRQPVDLG…TELTNRIKNG (124 aa)) is domain IV, binds dsDNA.

It belongs to the DnaA family. Oligomerizes as a right-handed, spiral filament on DNA at oriC.

It is found in the cytoplasm. Its function is as follows. Plays an essential role in the initiation and regulation of chromosomal replication. ATP-DnaA binds to the origin of replication (oriC) to initiate formation of the DNA replication initiation complex once per cell cycle. Binds the DnaA box (a 9 base pair repeat at the origin) and separates the double-stranded (ds)DNA. Forms a right-handed helical filament on oriC DNA; dsDNA binds to the exterior of the filament while single-stranded (ss)DNA is stabiized in the filament's interior. The ATP-DnaA-oriC complex binds and stabilizes one strand of the AT-rich DNA unwinding element (DUE), permitting loading of DNA polymerase. After initiation quickly degrades to an ADP-DnaA complex that is not apt for DNA replication. Binds acidic phospholipids. The protein is Chromosomal replication initiator protein DnaA of Streptomyces avermitilis (strain ATCC 31267 / DSM 46492 / JCM 5070 / NBRC 14893 / NCIMB 12804 / NRRL 8165 / MA-4680).